The following is a 485-amino-acid chain: tRNA sulfurtransferase (485 aa).

The THUMP domain maps to 63–167 (DKLVERLSCM…NELLYLVTAI (105 aa)). Residues 185–186 (LI), K267, G289, and Q298 contribute to the ATP site. A disulfide bond links C346 and C458. A Rhodanese domain is found at 406 to 485 (LAENEVILDI…FNNIKVYRQN (80 aa)). C458 functions as the Cysteine persulfide intermediate in the catalytic mechanism.

Belongs to the ThiI family.

Its subcellular location is the cytoplasm. The enzyme catalyses [ThiI sulfur-carrier protein]-S-sulfanyl-L-cysteine + a uridine in tRNA + 2 reduced [2Fe-2S]-[ferredoxin] + ATP + H(+) = [ThiI sulfur-carrier protein]-L-cysteine + a 4-thiouridine in tRNA + 2 oxidized [2Fe-2S]-[ferredoxin] + AMP + diphosphate. It catalyses the reaction [ThiS sulfur-carrier protein]-C-terminal Gly-Gly-AMP + S-sulfanyl-L-cysteinyl-[cysteine desulfurase] + AH2 = [ThiS sulfur-carrier protein]-C-terminal-Gly-aminoethanethioate + L-cysteinyl-[cysteine desulfurase] + A + AMP + 2 H(+). It functions in the pathway cofactor biosynthesis; thiamine diphosphate biosynthesis. Functionally, catalyzes the ATP-dependent transfer of a sulfur to tRNA to produce 4-thiouridine in position 8 of tRNAs, which functions as a near-UV photosensor. Also catalyzes the transfer of sulfur to the sulfur carrier protein ThiS, forming ThiS-thiocarboxylate. This is a step in the synthesis of thiazole, in the thiamine biosynthesis pathway. The sulfur is donated as persulfide by IscS. The sequence is that of tRNA sulfurtransferase from Tolumonas auensis (strain DSM 9187 / NBRC 110442 / TA 4).